Consider the following 59-residue polypeptide: Chromatin protein Cren7 (59 aa).

This sequence belongs to the Cren7 family. As to quaternary structure, monomer. In terms of processing, methylated at multiple sites, to varying extents.

The protein localises to the chromosome. It localises to the cytoplasm. Functionally, a chromatin protein, binds double-stranded DNA without sequence specificity. Constrains negative DNA supercoils. In Pyrobaculum neutrophilum (strain DSM 2338 / JCM 9278 / NBRC 100436 / V24Sta) (Thermoproteus neutrophilus), this protein is Chromatin protein Cren7.